Here is a 178-residue protein sequence, read N- to C-terminus: High mobility group B protein 1 (178 aa).

Basic and acidic residues-rich tracts occupy residues 1–52 (MKTA…DPNK) and 101–118 (APYE…EKQM). Disordered stretches follow at residues 1–59 (MKTA…APSA) and 75–178 (NPNV…EEED). The HMG box DNA-binding region spans 53 to 122 (PKRAPSAFFV…EYEKQMDAYN (70 aa)). A phosphoserine mark is found at Ser137 and Ser146. Residues 140 to 178 (NDEDEASGEEELLEKEAAGDDEEEEEEEDDDDDDDEEED) are compositionally biased toward acidic residues.

The protein belongs to the HMGB family. In terms of tissue distribution, expressed in cotyledons, roots, stems, leaves and flowers (excluding pedicels).

The protein resides in the nucleus. In terms of biological role, binds preferentially double-stranded DNA. Modulates general plant growth and stress tolerance. Confers sensitivity to salt and genotoxic (methyl methanesulfonate, MMS) stresses. The polypeptide is High mobility group B protein 1 (HMGB1) (Arabidopsis thaliana (Mouse-ear cress)).